Here is a 589-residue protein sequence, read N- to C-terminus: Splicing factor U2af large subunit B (589 aa).

Positions 1–195 (MMSYEGNGDG…KRRSGFDMAP (195 aa)) are disordered. Residues 14–27 (STENHNENYISLES) are compositionally biased toward polar residues. 2 stretches are compositionally biased toward basic and acidic residues: residues 29–100 (PFHE…DRQR) and 109–145 (RDRS…DREV). Composition is skewed to basic residues over residues 146–156 (RHRRRSRSRSR) and 164–188 (RSEH…SKRR). RRM domains lie at 255–338 (RRVY…RPTD), 375–453 (DRIF…RAIQ), and 494–580 (QVVT…YPED).

The protein belongs to the splicing factor SR family. In terms of assembly, component of the spliceosome. Interacts with SF1 in the nucleus.

Its subcellular location is the nucleus. The protein resides in the nucleus speckle. In terms of biological role, necessary for the splicing of pre-mRNA. The polypeptide is Splicing factor U2af large subunit B (Arabidopsis thaliana (Mouse-ear cress)).